A 592-amino-acid chain; its full sequence is Putative phosphatidylinositol 4-kinase alpha-like protein P2 (592 aa).

The pleckstrin homology (PH) domain conferring phosphoinositide binding specificity stretch occupies residues 180 to 318; sequence EQLVEENTGS…ISWQAAIFKL (139 aa). Residues 275–576 form the PI3K/PI4K catalytic domain; sequence KVKRCGVSEL…VIQSCFLSNR (302 aa). The tract at residues 281–287 is G-loop; it reads VSELEKE. The interval 441-449 is catalytic loop; the sequence is QIKDRHNGN. The activation loop stretch occupies residues 460–484; the sequence is HIDFGFMFESSPGGNLGWEPDIKLT.

It belongs to the PI3/PI4-kinase family. Type III PI4K subfamily.

The protein is Putative phosphatidylinositol 4-kinase alpha-like protein P2 (PI4KAP2) of Homo sapiens (Human).